A 682-amino-acid polypeptide reads, in one-letter code: Potassium-transporting ATPase ATP-binding subunit (682 aa).

The next 4 helical transmembrane spans lie at 34–54, 62–82, 219–239, and 254–274; these read PVMFIVWIGSLLTTCISIAMA, ALFSAAISGWLWVTVLFANFA, IALTILLIALTIVFLLATATL, and VLVALLVCLIPTTIGGLLSAI. Aspartate 307 (4-aspartylphosphate intermediate) is an active-site residue. ATP-binding positions include aspartate 344, glutamate 348, 377–384, and lysine 395; that span reads FTAQSRMS. The Mg(2+) site is built by aspartate 518 and aspartate 522. The next 3 helical transmembrane spans lie at 588 to 608, 616 to 636, and 656 to 676; these read FAIIPAAFAATYPQLNALNIM, AILSAVIFNALIIVFLIPLAL, and IYGLGGLLVPFIGIKVIDLLL.

It belongs to the cation transport ATPase (P-type) (TC 3.A.3) family. Type IA subfamily. In terms of assembly, the system is composed of three essential subunits: KdpA, KdpB and KdpC.

It is found in the cell inner membrane. The catalysed reaction is K(+)(out) + ATP + H2O = K(+)(in) + ADP + phosphate + H(+). Its function is as follows. Part of the high-affinity ATP-driven potassium transport (or Kdp) system, which catalyzes the hydrolysis of ATP coupled with the electrogenic transport of potassium into the cytoplasm. This subunit is responsible for energy coupling to the transport system and for the release of the potassium ions to the cytoplasm. The sequence is that of Potassium-transporting ATPase ATP-binding subunit from Escherichia coli O6:K15:H31 (strain 536 / UPEC).